The sequence spans 115 residues: T cell receptor beta variable 11-1 (115 aa).

A signal peptide spans 1 to 21 (MSTRLLCWMALCLLGAELSEA). An Ig-like domain is found at 22–115 (EVAQSPRYKI…SAMYLCASSL (94 aa)). Cys-42 and Cys-111 are joined by a disulfide.

Alpha-beta TR is a heterodimer composed of an alpha and beta chain; disulfide-linked. The alpha-beta TR is associated with the transmembrane signaling CD3 coreceptor proteins to form the TR-CD3 (TcR or TCR). The assembly of alpha-beta TR heterodimers with CD3 occurs in the endoplasmic reticulum where a single alpha-beta TR heterodimer associates with one CD3D-CD3E heterodimer, one CD3G-CD3E heterodimer and one CD247 homodimer forming a stable octameric structure. CD3D-CD3E and CD3G-CD3E heterodimers preferentially associate with TR alpha and TR beta chains, respectively. The association of the CD247 homodimer is the last step of TcR assembly in the endoplasmic reticulum and is required for transport to the cell surface.

The protein resides in the cell membrane. Functionally, v region of the variable domain of T cell receptor (TR) beta chain that participates in the antigen recognition. Alpha-beta T cell receptors are antigen specific receptors which are essential to the immune response and are present on the cell surface of T lymphocytes. Recognize peptide-major histocompatibility (MH) (pMH) complexes that are displayed by antigen presenting cells (APC), a prerequisite for efficient T cell adaptive immunity against pathogens. Binding of alpha-beta TR to pMH complex initiates TR-CD3 clustering on the cell surface and intracellular activation of LCK that phosphorylates the ITAM motifs of CD3G, CD3D, CD3E and CD247 enabling the recruitment of ZAP70. In turn ZAP70 phosphorylates LAT, which recruits numerous signaling molecules to form the LAT signalosome. The LAT signalosome propagates signal branching to three major signaling pathways, the calcium, the mitogen-activated protein kinase (MAPK) kinase and the nuclear factor NF-kappa-B (NF-kB) pathways, leading to the mobilization of transcription factors that are critical for gene expression and essential for T cell growth and differentiation. The T cell repertoire is generated in the thymus, by V-(D)-J rearrangement. This repertoire is then shaped by intrathymic selection events to generate a peripheral T cell pool of self-MH restricted, non-autoaggressive T cells. Post-thymic interaction of alpha-beta TR with the pMH complexes shapes TR structural and functional avidity. This Homo sapiens (Human) protein is T cell receptor beta variable 11-1.